The following is a 466-amino-acid chain: Cysteine--tRNA ligase (466 aa).

Cys28 contacts Zn(2+). Positions 30 to 40 (PTVYNYIHIGN) match the 'HIGH' region motif. Zn(2+)-binding residues include Cys208, His233, and Glu237. The short motif at 265–269 (KMSKS) is the 'KMSKS' region element. Lys268 lines the ATP pocket.

Belongs to the class-I aminoacyl-tRNA synthetase family. In terms of assembly, monomer. Zn(2+) is required as a cofactor.

It is found in the cytoplasm. The catalysed reaction is tRNA(Cys) + L-cysteine + ATP = L-cysteinyl-tRNA(Cys) + AMP + diphosphate. This chain is Cysteine--tRNA ligase, found in Staphylococcus saprophyticus subsp. saprophyticus (strain ATCC 15305 / DSM 20229 / NCIMB 8711 / NCTC 7292 / S-41).